The sequence spans 252 residues: Cysteine-rich repeat secretory protein 38 (252 aa).

The N-terminal stretch at 1-27 is a signal peptide; the sequence is MSSLKRIVWFPILAIAIQILSIHTVLS. 2 Gnk2-homologous domains span residues 34–136 and 142–248; these read FLFH…STNF and FENR…IYPF.

Belongs to the cysteine-rich repeat secretory protein family.

It is found in the secreted. This chain is Cysteine-rich repeat secretory protein 38 (CRRSP38), found in Arabidopsis thaliana (Mouse-ear cress).